Here is a 76-residue protein sequence, read N- to C-terminus: Kappa-actitoxin-Avd4l (76 aa).

The N-terminal stretch at 1–19 (MNKALFLCLVVLCAAVVFA) is a signal peptide. A propeptide spanning residues 20-31 (AEDLQKAKHAPF) is cleaved from the precursor. Disulfide bonds link Cys-37/Cys-72, Cys-39/Cys-65, and Cys-55/Cys-73.

This sequence belongs to the sea anemone type 3 (BDS) potassium channel toxin family. Weakly expressed in the ectodermal tissue from the distal and proximal tentacles, body wall, and oral disk.

It localises to the secreted. The protein localises to the nematocyst. Its function is as follows. Blocks Kv3 voltage-gated potassium channels. Reduces blood pressure. The polypeptide is Kappa-actitoxin-Avd4l (Anemonia viridis (Snakelocks anemone)).